The primary structure comprises 59 residues: UPF0339 protein CC_2965 (59 aa).

This sequence belongs to the UPF0339 family.

This chain is UPF0339 protein CC_2965, found in Caulobacter vibrioides (strain ATCC 19089 / CIP 103742 / CB 15) (Caulobacter crescentus).